Reading from the N-terminus, the 262-residue chain is Nurim (262 aa).

Residues 1-4 are Nuclear-facing; it reads MAPA. A helical transmembrane segment spans residues 5 to 28; sequence LLLVPAALASFILAFGTGVEFVRF. The Perinuclear space portion of the chain corresponds to 29-58; sequence TSLRPLLGGIPESGGPDARHGWLAALQDRS. A helical transmembrane segment spans residues 59–80; sequence ILASLAWDLCLLLLFVVQHSLM. Residues 81 to 97 lie on the Nuclear side of the membrane; that stretch reads ATEAVKAWTSRYFGVLQ. Residues 98 to 114 form a helical membrane-spanning segment; the sequence is RSLYVACTALALQLVMR. Residues 115–133 lie on the Perinuclear space side of the membrane; sequence YWETTPRGPVLWEARAEPW. A helical membrane pass occupies residues 134–164; that stretch reads ATWVPLLCFVLHVVSWLLIFSILLVFDYAEL. Topologically, residues 165–191 are nuclear; it reads MGLKQVYYHVLGLGEPLSLKSPRALRL. Residues 192–210 traverse the membrane as a helical segment; sequence FSHLRHPVCVELLTVLWVV. At 211–216 the chain is on the perinuclear space side; the sequence is PTLGTD. The chain crosses the membrane as a helical span at residues 217–234; it reads RLLLALLFTLYLGLAHGL. The Nuclear portion of the chain corresponds to 235–262; that stretch reads DQQDLRYLRSQLQRKLHLLSRPQDGEAE.

It belongs to the nurim family.

Its subcellular location is the nucleus inner membrane. The polypeptide is Nurim (Nrm) (Mus musculus (Mouse)).